We begin with the raw amino-acid sequence, 902 residues long: U3 small nucleolar RNA-associated protein 21 homolog (902 aa).

14 WD repeats span residues 40–71 (DIEA…LLFV), 80–110 (TCLK…WDID), 119–154 (THLD…LHTT), 164–198 (TSLL…RVHE), 206–243 (GITS…MEFK), 249–284 (LSCS…QNVT), 289–332 (FGSL…RSRN), 339–373 (SFVK…QSTE), 399–438 (TALS…GQHV), 447–481 (VRSV…KRKS), 492–528 (VTAV…DSLD), 533–568 (ITHA…VREL), 570–611 (GHSN…DSIS), and 613–651 (PSVC…KHVS).

Interacts with snoRNA U3. Interacts with MPP10. Component of the ribosomal small subunit (SSU) processome composed of at least 40 protein subunits and snoRNA U3.

The protein resides in the nucleus. Its subcellular location is the nucleolus. In terms of biological role, involved in nucleolar processing of pre-18S ribosomal RNA and ribosome assembly. This Schizosaccharomyces pombe (strain 972 / ATCC 24843) (Fission yeast) protein is U3 small nucleolar RNA-associated protein 21 homolog.